A 228-amino-acid polypeptide reads, in one-letter code: NAD(P)H-quinone oxidoreductase subunit K, chloroplastic (228 aa).

Positions 43, 44, 108, and 139 each coordinate [4Fe-4S] cluster.

It belongs to the complex I 20 kDa subunit family. NDH is composed of at least 16 different subunits, 5 of which are encoded in the nucleus. The cofactor is [4Fe-4S] cluster.

The protein resides in the plastid. Its subcellular location is the chloroplast thylakoid membrane. It carries out the reaction a plastoquinone + NADH + (n+1) H(+)(in) = a plastoquinol + NAD(+) + n H(+)(out). The enzyme catalyses a plastoquinone + NADPH + (n+1) H(+)(in) = a plastoquinol + NADP(+) + n H(+)(out). Functionally, NDH shuttles electrons from NAD(P)H:plastoquinone, via FMN and iron-sulfur (Fe-S) centers, to quinones in the photosynthetic chain and possibly in a chloroplast respiratory chain. The immediate electron acceptor for the enzyme in this species is believed to be plastoquinone. Couples the redox reaction to proton translocation, and thus conserves the redox energy in a proton gradient. This chain is NAD(P)H-quinone oxidoreductase subunit K, chloroplastic, found in Ceratophyllum demersum (Rigid hornwort).